A 125-amino-acid chain; its full sequence is SOSS complex subunit C homolog A (125 aa).

A compositionally biased stretch (polar residues) spans 1–16 (MAFPNTSAQQAETNSK). Disordered stretches follow at residues 1 to 20 (MAFP…SLEE), 38 to 74 (SNTN…AAFN), and 105 to 125 (PATP…NNPK).

Belongs to the SOSS-C family.

This chain is SOSS complex subunit C homolog A, found in Drosophila willistoni (Fruit fly).